A 243-amino-acid chain; its full sequence is Voltage-gated monoatomic cation channel TMEM109 (243 aa).

Residues 1–33 (MAGAHSNPSWSRHLFKAVLMVLGALLLVHSASA) form the signal peptide. The Lumenal portion of the chain corresponds to 34-83 (QTHREFASPGQQKRESSADILTEIGRSLKETLDTWLGPETMHVISETLLQ). A helical transmembrane segment spans residues 84–104 (VMWAISSAISVACFALSGIAA). The Cytoplasmic segment spans residues 105–135 (QLLSALGLDGEQLTQVLKLSPSQVQTLLLWG). The helical transmembrane segment at 136-156 (AAALVIYWLLSLLLGLVLALL) threads the bilayer. Residues 157–185 (GRILGGLKLVLFVAGFVGLVRSVPDPSTR) lie on the Lumenal side of the membrane. A helical transmembrane segment spans residues 186–205 (ALLLLALLTVFALLSRLTGS). Over 206 to 243 (RSSGTHLEAKVRGLERQIEELRGRQRRAAKIPRSMEEE) the chain is Cytoplasmic.

As to quaternary structure, homooligomer. Interacts with CRYAB; in the cellular response to DNA damage.

Its subcellular location is the nucleus outer membrane. It localises to the endoplasmic reticulum membrane. The protein localises to the sarcoplasmic reticulum membrane. It carries out the reaction K(+)(in) = K(+)(out). It catalyses the reaction Ca(2+)(in) = Ca(2+)(out). Functions as a voltage-gated monoatomic cation channel permeable to both potassium and calcium. Plays a role in the cellular response to DNA damage. This chain is Voltage-gated monoatomic cation channel TMEM109, found in Rattus norvegicus (Rat).